Here is a 280-residue protein sequence, read N- to C-terminus: Fructose-1,6-bisphosphatase/inositol-1-monophosphatase (280 aa).

Residues Glu73, Asp94, Leu96, and Asp97 each coordinate Mg(2+). Residues 97–99, Arg195, Val200, and Arg219 each bind substrate; that span reads DGT. A Mg(2+)-binding site is contributed by Asp226.

The protein belongs to the inositol monophosphatase superfamily. FBPase class 4 family. It depends on Mg(2+) as a cofactor.

It carries out the reaction beta-D-fructose 1,6-bisphosphate + H2O = beta-D-fructose 6-phosphate + phosphate. The catalysed reaction is a myo-inositol phosphate + H2O = myo-inositol + phosphate. Its function is as follows. Phosphatase with broad specificity; it can dephosphorylate fructose 1,6-bisphosphate, and both D and L isomers of inositol-1-phosphate (I-1-P). The sequence is that of Fructose-1,6-bisphosphatase/inositol-1-monophosphatase (suhB) from Methanothermobacter thermautotrophicus (strain ATCC 29096 / DSM 1053 / JCM 10044 / NBRC 100330 / Delta H) (Methanobacterium thermoautotrophicum).